The chain runs to 128 residues: Small ribosomal subunit protein uS11 (128 aa).

Belongs to the universal ribosomal protein uS11 family. Part of the 30S ribosomal subunit. Interacts with proteins S7 and S18. Binds to IF-3.

Functionally, located on the platform of the 30S subunit, it bridges several disparate RNA helices of the 16S rRNA. Forms part of the Shine-Dalgarno cleft in the 70S ribosome. This Ligilactobacillus salivarius (strain UCC118) (Lactobacillus salivarius) protein is Small ribosomal subunit protein uS11.